The chain runs to 156 residues: dCTP deaminase (156 aa).

DCTP-binding positions include 79–84, Asp95, Gln124, and Tyr138; that span reads RSSLAR.

The protein belongs to the dCTP deaminase family. Homotrimer.

It catalyses the reaction dCTP + H2O + H(+) = dUTP + NH4(+). The protein operates within pyrimidine metabolism; dUMP biosynthesis; dUMP from dCTP (dUTP route): step 1/2. Functionally, catalyzes the deamination of dCTP to dUTP. The polypeptide is dCTP deaminase (Pyrococcus horikoshii (strain ATCC 700860 / DSM 12428 / JCM 9974 / NBRC 100139 / OT-3)).